The primary structure comprises 306 residues: Manganese-binding lipoprotein MntA (306 aa).

The N-terminal stretch at 1-18 (MRQGLMAAVLFATFALTG) is a signal peptide. Residue Cys19 is the site of N-palmitoyl cysteine attachment. Cys19 carries the S-diacylglycerol cysteine lipid modification. His66, His132, His198, and Asp278 together coordinate Mn(2+).

It belongs to the bacterial solute-binding protein 9 family. The complex is probably composed of two ATP-binding proteins (MntB), two transmembrane proteins (MntC and MntD) and a solute-binding protein (MntA). Interacts with FloT.

It localises to the cell membrane. The protein resides in the membrane raft. In terms of biological role, probably part of ATP-binding cassette (ABC) transport system MntABCD involved in manganese import. Binds manganese and delivers it to the membrane permease for translocation into the cytoplasm. The chain is Manganese-binding lipoprotein MntA from Bacillus subtilis (strain 168).